Consider the following 466-residue polypeptide: A-type ATP synthase subunit B 2 (466 aa).

Belongs to the ATPase alpha/beta chains family. In terms of assembly, has multiple subunits with at least A(3), B(3), C, D, E, F, H, I and proteolipid K(x).

The protein resides in the cell membrane. In terms of biological role, component of the A-type ATP synthase that produces ATP from ADP in the presence of a proton gradient across the membrane. The B chain is a regulatory subunit. The chain is A-type ATP synthase subunit B 2 from Methanospirillum hungatei JF-1 (strain ATCC 27890 / DSM 864 / NBRC 100397 / JF-1).